Consider the following 292-residue polypeptide: Diaminopimelate epimerase (292 aa).

Residues N14 and N78 each coordinate substrate. C87 functions as the Proton donor in the catalytic mechanism. Substrate contacts are provided by residues 88–89, N164, N197, and 221–222; these read GN and ER. The active-site Proton acceptor is C230. 231 to 232 lines the substrate pocket; sequence GT.

Belongs to the diaminopimelate epimerase family. As to quaternary structure, homodimer.

The protein localises to the cytoplasm. The catalysed reaction is (2S,6S)-2,6-diaminopimelate = meso-2,6-diaminopimelate. It participates in amino-acid biosynthesis; L-lysine biosynthesis via DAP pathway; DL-2,6-diaminopimelate from LL-2,6-diaminopimelate: step 1/1. Catalyzes the stereoinversion of LL-2,6-diaminopimelate (L,L-DAP) to meso-diaminopimelate (meso-DAP), a precursor of L-lysine and an essential component of the bacterial peptidoglycan. In Leifsonia xyli subsp. xyli (strain CTCB07), this protein is Diaminopimelate epimerase.